A 100-amino-acid chain; its full sequence is Urease subunit gamma (100 aa).

Belongs to the urease gamma subunit family. Heterotrimer of UreA (gamma), UreB (beta) and UreC (alpha) subunits. Three heterotrimers associate to form the active enzyme.

The protein resides in the cytoplasm. It catalyses the reaction urea + 2 H2O + H(+) = hydrogencarbonate + 2 NH4(+). Its pathway is nitrogen metabolism; urea degradation; CO(2) and NH(3) from urea (urease route): step 1/1. In Dinoroseobacter shibae (strain DSM 16493 / NCIMB 14021 / DFL 12), this protein is Urease subunit gamma.